Consider the following 136-residue polypeptide: Small ribosomal subunit protein bS6 (136 aa).

The disordered stretch occupies residues Val96–Ala136.

Belongs to the bacterial ribosomal protein bS6 family.

In terms of biological role, binds together with bS18 to 16S ribosomal RNA. This is Small ribosomal subunit protein bS6 from Methylococcus capsulatus (strain ATCC 33009 / NCIMB 11132 / Bath).